A 211-amino-acid chain; its full sequence is MPYVLPALSYAYDALEPHIDARTMEIHHTRHHQTYVNGLNAALEGAGLDSEEPVEQLLRRIPALPPGIHGAVRNHGGGHANHSLLWTVMSPSGGGRPDGRLAADIQAQLGGHDAFQAAFTQAALGRFGSGWAWLTVTPAGRLRVDSSANQDSPLMEGNTPILGLDVWEHAYYLQYQNRRPEYIEAFYRVVDWAEVARRYEIALAELGREAA.

H27, H82, D165, and H169 together coordinate Mn(2+).

This sequence belongs to the iron/manganese superoxide dismutase family. In terms of assembly, homodimer. It depends on Mn(2+) as a cofactor.

It carries out the reaction 2 superoxide + 2 H(+) = H2O2 + O2. In terms of biological role, destroys superoxide anion radicals which are normally produced within the cells and which are toxic to biological systems. In Bordetella pertussis (strain Tohama I / ATCC BAA-589 / NCTC 13251), this protein is Superoxide dismutase [Mn] (sodA).